We begin with the raw amino-acid sequence, 157 residues long: Small ribosomal subunit protein bS6 (157 aa).

A compositionally biased stretch (basic and acidic residues) spans 96-151 (HEEGPSAMMRKADRDRDRDERGGGGFRGDREGGFRGDREGGGFRGDRGPRRPRDDA). The interval 96–157 (HEEGPSAMMR…RDDAPAATEE (62 aa)) is disordered.

It belongs to the bacterial ribosomal protein bS6 family.

In terms of biological role, binds together with bS18 to 16S ribosomal RNA. The sequence is that of Small ribosomal subunit protein bS6 from Rhodopseudomonas palustris (strain BisA53).